A 334-amino-acid polypeptide reads, in one-letter code: GTPase Obg (334 aa).

The Obg domain occupies 1–159; the sequence is MKFIDQAIIH…RDIQLELMLL (159 aa). The tract at residues 67–86 is disordered; sequence AQNGQNGSSRKSSGKKGDDI. The span at 68-77 shows a compositional bias: low complexity; that stretch reads QNGQNGSSRK. An OBG-type G domain is found at 160 to 333; the sequence is ADVGTLGMPN…LCSDITKYLK (174 aa). GTP is bound by residues 166 to 173, 191 to 195, 213 to 216, 283 to 286, and 314 to 316; these read GMPNVGKS, FTTLH, DIPG, NKID, and SSM. Mg(2+)-binding residues include Ser173 and Thr193.

Belongs to the TRAFAC class OBG-HflX-like GTPase superfamily. OBG GTPase family. In terms of assembly, monomer. It depends on Mg(2+) as a cofactor.

It is found in the cytoplasm. Its function is as follows. An essential GTPase which binds GTP, GDP and possibly (p)ppGpp with moderate affinity, with high nucleotide exchange rates and a fairly low GTP hydrolysis rate. Plays a role in control of the cell cycle, stress response, ribosome biogenesis and in those bacteria that undergo differentiation, in morphogenesis control. In Buchnera aphidicola subsp. Acyrthosiphon pisum (strain 5A), this protein is GTPase Obg.